The following is an 858-amino-acid chain: Bifunctional uridylyltransferase/uridylyl-removing enzyme (858 aa).

The tract at residues 1–324 (MSASVAEPPP…PATSGVTRVL (324 aa)) is uridylyltransferase. The tract at residues 325–681 (SPGRFVEKQG…ARPSPVGDAL (357 aa)) is uridylyl-removing. The HD domain maps to 443–565 (VDQHILMVLR…VGSERRLTAL (123 aa)). ACT domains lie at 682 to 761 (QVLV…PEPS) and 790 to 858 (ILSV…AIAV).

It belongs to the GlnD family. The cofactor is Mg(2+).

It catalyses the reaction [protein-PII]-L-tyrosine + UTP = [protein-PII]-uridylyl-L-tyrosine + diphosphate. The enzyme catalyses [protein-PII]-uridylyl-L-tyrosine + H2O = [protein-PII]-L-tyrosine + UMP + H(+). Its activity is regulated as follows. Uridylyltransferase (UTase) activity is inhibited by glutamine, while glutamine activates uridylyl-removing (UR) activity. In terms of biological role, modifies, by uridylylation and deuridylylation, the PII regulatory proteins (GlnB and homologs), in response to the nitrogen status of the cell that GlnD senses through the glutamine level. Under low glutamine levels, catalyzes the conversion of the PII proteins and UTP to PII-UMP and PPi, while under higher glutamine levels, GlnD hydrolyzes PII-UMP to PII and UMP (deuridylylation). Thus, controls uridylylation state and activity of the PII proteins, and plays an important role in the regulation of nitrogen assimilation and metabolism. This is Bifunctional uridylyltransferase/uridylyl-removing enzyme from Burkholderia mallei (strain ATCC 23344).